The primary structure comprises 356 residues: Protein RecA (356 aa).

ATP is bound at residue 77–84; that stretch reads GPESSGKT.

This sequence belongs to the RecA family.

It localises to the cytoplasm. Can catalyze the hydrolysis of ATP in the presence of single-stranded DNA, the ATP-dependent uptake of single-stranded DNA by duplex DNA, and the ATP-dependent hybridization of homologous single-stranded DNAs. It interacts with LexA causing its activation and leading to its autocatalytic cleavage. This chain is Protein RecA, found in Caulobacter vibrioides (strain ATCC 19089 / CIP 103742 / CB 15) (Caulobacter crescentus).